Consider the following 158-residue polypeptide: Transcription elongation factor GreA (158 aa).

Positions 48–74 form a coiled coil; the sequence is EYDAAKNRQGFIEGRIKELNDKIARAE.

It belongs to the GreA/GreB family.

In terms of biological role, necessary for efficient RNA polymerase transcription elongation past template-encoded arresting sites. The arresting sites in DNA have the property of trapping a certain fraction of elongating RNA polymerases that pass through, resulting in locked ternary complexes. Cleavage of the nascent transcript by cleavage factors such as GreA or GreB allows the resumption of elongation from the new 3'terminus. GreA releases sequences of 2 to 3 nucleotides. The protein is Transcription elongation factor GreA of Syntrophotalea carbinolica (strain DSM 2380 / NBRC 103641 / GraBd1) (Pelobacter carbinolicus).